Consider the following 135-residue polypeptide: D-ribose pyranase (135 aa).

The active-site Proton donor is the His20. Substrate is bound by residues Asp28, His102, and 124–126 (YAN).

This sequence belongs to the RbsD / FucU family. RbsD subfamily. As to quaternary structure, homodecamer.

It localises to the cytoplasm. The catalysed reaction is beta-D-ribopyranose = beta-D-ribofuranose. Its pathway is carbohydrate metabolism; D-ribose degradation; D-ribose 5-phosphate from beta-D-ribopyranose: step 1/2. Functionally, catalyzes the interconversion of beta-pyran and beta-furan forms of D-ribose. The protein is D-ribose pyranase of Rhodopirellula baltica (strain DSM 10527 / NCIMB 13988 / SH1).